The primary structure comprises 310 residues: Malate dehydrogenase (310 aa).

NAD(+) contacts are provided by residues 7 to 12 and D32; that span reads GAGNVG. 2 residues coordinate substrate: R81 and R87. NAD(+) is bound by residues N94 and 117–119; that span reads VSN. 2 residues coordinate substrate: N119 and R150. The active-site Proton acceptor is H174.

It belongs to the LDH/MDH superfamily. MDH type 3 family.

It catalyses the reaction (S)-malate + NAD(+) = oxaloacetate + NADH + H(+). Catalyzes the reversible oxidation of malate to oxaloacetate. The polypeptide is Malate dehydrogenase (Chlorobium chlorochromatii (strain CaD3)).